Consider the following 312-residue polypeptide: Tumor necrosis factor receptor type 1-associated DEATH domain protein (312 aa).

A Nuclear export signal motif is present at residues 147 to 163 (LRDEELTELENALRNLT). The segment at 166-200 (SAGGQGSDVQGTPAPLQSLAPSPPEEKPPPPQPGQ) is disordered. One can recognise a Death domain in the interval 215–305 (NLQDQQKFAR…SLAEDLLGLA (91 aa)). The interval 222–289 (FARSVGLKWR…ATLQRLVEAL (68 aa)) is interaction with KRT14 and KRT18. Residues 231-244 (RKVGRSLQRSCRAL) carry the Nuclear localization signal motif.

Stimulation of TNF-alpha receptor TNFRSF1A leads to the formation of two distinct signaling complexes. Plasma membrane-bound complex I is composed of TNFRSF1A, TRADD, RIPK1, TRAF2 and BIRC2/c-IAP1 or BIRC3 which interacts with CHUCK/IKK-alpha, IKBKB/IKK-beta and IKBKG/IKK-gamma promoting cell survival. Subsequently, TRADD, RIPK1 and TRAF2 dissociate from TNFRSF1A and form cytoplasmic complex II with FADD and caspase CASP8 promoting cell apoptosis. Within complex I, interacts with TNFRSF1A/TNFR1, TRAF2 and kinase RIPK1. Within complex I, interacts with TRPC4AP; the interaction promotes NF-kappa B activation. UXT1 associates with complex I; the interaction prevents the formation of complex II. Within complex I Interacts with scaffold protein DAB2IP. Interacts with autophagy receptor SQSTM1. Interacts with E3 ligase TRIP12. Interacts with kinase HIPK2. Interacts with keratin KRT14. Interacts with keratin KRT18. Interacts with keratins KRT16 and KRT17. Interacts with FADD. Interacts with TOMM70. Interacts with TMC8; the interaction impairs the formation of complex I and facilites complex II formation.

The protein localises to the nucleus. The protein resides in the cytoplasm. Its subcellular location is the cytoskeleton. In terms of biological role, adapter molecule for TNFRSF1A/TNFR1 that specifically associates with the cytoplasmic domain of activated TNFRSF1A/TNFR1 mediating its interaction with FADD. Overexpression of TRADD leads to two major TNF-induced responses, apoptosis and activation of NF-kappa-B. The nuclear form acts as a tumor suppressor by preventing ubiquitination and degradation of isoform p19ARF/ARF of CDKN2A by TRIP12: acts by interacting with TRIP12, leading to disrupt interaction between TRIP12 and isoform p19ARF/ARF of CDKN2A. The protein is Tumor necrosis factor receptor type 1-associated DEATH domain protein of Bos taurus (Bovine).